The following is a 131-amino-acid chain: Small ribosomal subunit protein uS11 (131 aa).

It belongs to the universal ribosomal protein uS11 family. Part of the 30S ribosomal subunit. Interacts with proteins S7 and S18. Binds to IF-3.

Its function is as follows. Located on the platform of the 30S subunit, it bridges several disparate RNA helices of the 16S rRNA. Forms part of the Shine-Dalgarno cleft in the 70S ribosome. This is Small ribosomal subunit protein uS11 from Endomicrobium trichonymphae.